The following is a 159-amino-acid chain: Large ribosomal subunit protein uL15 (159 aa).

Residues 1–46 (MKLNELSPSVPKKNRKRIGRGNSSGWGKTAGKGSNGQNSRAGGGVK) are disordered. Residues 22–34 (NSSGWGKTAGKGS) show a composition bias toward gly residues.

It belongs to the universal ribosomal protein uL15 family. Part of the 50S ribosomal subunit.

Binds to the 23S rRNA. This chain is Large ribosomal subunit protein uL15, found in Fusobacterium nucleatum subsp. nucleatum (strain ATCC 25586 / DSM 15643 / BCRC 10681 / CIP 101130 / JCM 8532 / KCTC 2640 / LMG 13131 / VPI 4355).